The following is a 155-amino-acid chain: Endoribonuclease YbeY (155 aa).

3 residues coordinate Zn(2+): His-114, His-118, and His-124.

The protein belongs to the endoribonuclease YbeY family. Zn(2+) serves as cofactor.

It is found in the cytoplasm. Functionally, single strand-specific metallo-endoribonuclease involved in late-stage 70S ribosome quality control and in maturation of the 3' terminus of the 16S rRNA. The chain is Endoribonuclease YbeY from Escherichia coli O1:K1 / APEC.